The sequence spans 380 residues: Cobalt-precorrin-5B C(1)-methyltransferase (380 aa).

This sequence belongs to the CbiD family.

It catalyses the reaction Co-precorrin-5B + S-adenosyl-L-methionine = Co-precorrin-6A + S-adenosyl-L-homocysteine. The protein operates within cofactor biosynthesis; adenosylcobalamin biosynthesis; cob(II)yrinate a,c-diamide from sirohydrochlorin (anaerobic route): step 6/10. Functionally, catalyzes the methylation of C-1 in cobalt-precorrin-5B to form cobalt-precorrin-6A. The polypeptide is Cobalt-precorrin-5B C(1)-methyltransferase (Salinispora arenicola (strain CNS-205)).